We begin with the raw amino-acid sequence, 400 residues long: DNA primase large subunit PriL (400 aa).

Residues C247, C356, C367, and C373 each contribute to the [4Fe-4S] cluster site.

It belongs to the eukaryotic-type primase large subunit family. As to quaternary structure, heterodimer of a small subunit (PriS) and a large subunit (PriL). It depends on [4Fe-4S] cluster as a cofactor.

Its function is as follows. Regulatory subunit of DNA primase, an RNA polymerase that catalyzes the synthesis of short RNA molecules used as primers for DNA polymerase during DNA replication. Stabilizes and modulates the activity of the small subunit, increasing the rate of DNA synthesis, and conferring RNA synthesis capability. The DNA polymerase activity may enable DNA primase to also catalyze primer extension after primer synthesis. May also play a role in DNA repair. This chain is DNA primase large subunit PriL, found in Thermococcus kodakarensis (strain ATCC BAA-918 / JCM 12380 / KOD1) (Pyrococcus kodakaraensis (strain KOD1)).